We begin with the raw amino-acid sequence, 456 residues long: Protein trichome birefringence-like 25 (456 aa).

The chain crosses the membrane as a helical; Signal-anchor for type II membrane protein span at residues 26–42 (QIFLKSVAFFLLIGLAY). A GDS motif motif is present at residues 172 to 174 (GDS). The DCXHWCLPGXXDXWN motif signature appears at 426-440 (DCLHWCLPGPIDSWN).

Belongs to the PC-esterase family. TBL subfamily.

It localises to the membrane. May be involved in the O-acetylation of mannan. May act as a bridging protein that binds pectin and other cell wall polysaccharides. Probably involved in maintaining esterification of pectins. This Arabidopsis thaliana (Mouse-ear cress) protein is Protein trichome birefringence-like 25 (TBL25).